The sequence spans 823 residues: Molybdenum cofactor sulfurase (823 aa).

At Lys-228 the chain carries N6-(pyridoxal phosphate)lysine. Cys-392 is an active-site residue. The tract at residues 628–667 (SSTRLAEPRRGLGSRKSPLRPAMPGAFPQDTPTPEAERNP) is disordered. Residues 644–819 (SPLRPAMPGA…VMVGDVVTPS (176 aa)) enclose the MOSC domain.

The protein belongs to the class-V pyridoxal-phosphate-dependent aminotransferase family. MOCOS subfamily. Requires pyridoxal 5'-phosphate as cofactor.

It carries out the reaction Mo-molybdopterin + L-cysteine + AH2 = thio-Mo-molybdopterin + L-alanine + A + H2O. It participates in cofactor biosynthesis; molybdopterin biosynthesis. In terms of biological role, sulfurates the molybdenum cofactor. Sulfation of molybdenum is essential for xanthine dehydrogenase (XDH) and aldehyde oxidase (ADO) enzymes in which molybdenum cofactor is liganded by 1 oxygen and 1 sulfur atom in active form. The protein is Molybdenum cofactor sulfurase of Aspergillus niger (strain ATCC MYA-4892 / CBS 513.88 / FGSC A1513).